Reading from the N-terminus, the 137-residue chain is ATP synthase epsilon chain, chloroplastic (137 aa).

Belongs to the ATPase epsilon chain family. As to quaternary structure, F-type ATPases have 2 components, CF(1) - the catalytic core - and CF(0) - the membrane proton channel. CF(1) has five subunits: alpha(3), beta(3), gamma(1), delta(1), epsilon(1). CF(0) has three main subunits: a, b and c.

Its subcellular location is the plastid. The protein resides in the chloroplast thylakoid membrane. Its function is as follows. Produces ATP from ADP in the presence of a proton gradient across the membrane. The chain is ATP synthase epsilon chain, chloroplastic from Bigelowiella natans (Pedinomonas minutissima).